The chain runs to 498 residues: MVAEVSPKLAASPMKKPFGFRGKMGKWCCCCFPCCRGSGKNNMGAWRDHDDSAFTEPRYHVRREDLGKLHRAAWWGEVPRADLIVMLRGPGINKRDKKKRTALHLACANGNSEVVSLLLDRQCQLHVFDSKKRTALIKAVQCQEDECALMLLQHGTDPNLPDMYGNTALHYAVYNEDKLMAKTLLLYGADIESKNKGGLTPLLLAVHGQKQRMVKFLIKKKANLNALDRFGRTALILAVRCGSASIVSLLLQQNIDVFSQDVFGQTAEDYAVSSHHSIICQLLSDYKENQMPNNSSGNSNPEQDLKLTSEEEPQRLKGSENSQHEKVTQEPDINKDCDREVEEEMQKHGSNNVGLSENLTDGAAAGNGDGGLVPQRKSRKHENQQFPNTEIEEYHRPEKKSNEKNKVKSQIHSVDNLDDITWPSEIASEDYDLLFSNYETFTLLIEQLKMDFNDSASLSKIQDAVISEEHLLELKNSHYEQLTVEVEQMENMVHVLQK.

5 ANK repeats span residues 98-127 (KKRT…QLHV), 131-160 (KKRT…DPNL), 164-193 (YGNT…DIES), 197-226 (GGLT…NLNA), and 230-259 (FGRT…DVFS). The segment at 289 to 410 (NQMPNNSSGN…SNEKNKVKSQ (122 aa)) is disordered. A compositionally biased stretch (polar residues) spans 290-302 (QMPNNSSGNSNPE). The span at 303–338 (QDLKLTSEEEPQRLKGSENSQHEKVTQEPDINKDCD) shows a compositional bias: basic and acidic residues. A compositionally biased stretch (polar residues) spans 348–359 (HGSNNVGLSENL). The span at 392 to 406 (EEYHRPEKKSNEKNK) shows a compositional bias: basic and acidic residues. Residues 469–497 (EHLLELKNSHYEQLTVEVEQMENMVHVLQ) adopt a coiled-coil conformation.

It belongs to the POTE family.

In Homo sapiens (Human), this protein is POTE ankyrin domain family member A (POTEA).